Here is a 413-residue protein sequence, read N- to C-terminus: Protein arginine N-methyltransferase 2 (413 aa).

2 disordered regions span residues 65-85 (DDEEPNGVQTNGEQGDEQKSV) and 148-178 (ELEDDDEEEEEGQEEQTGTEEVEVEGESAPQ). A compositionally biased stretch (acidic residues) spans 148–173 (ELEDDDEEEEEGQEEQTGTEEVEVEG). The RMT2 domain occupies 192–413 (TGPDVTNSRY…YRLPLCKYMD (222 aa)). S-adenosyl-L-methionine-binding positions include Tyr201, Met230, 250–255 (HGMGIV), 271–273 (EAH), 298–299 (WQ), and Asp318.

Belongs to the class I-like SAM-binding methyltransferase superfamily. RMT2 methyltransferase family. In terms of assembly, monomer.

The protein localises to the cytoplasm. It is found in the nucleus. S-adenosyl-L-methionine-dependent protein-arginine N-methyltransferase that methylates the delta-nitrogen atom of arginine residues to form N5-methylarginine (type IV) in target proteins. Monomethylates ribosomal protein L12. The protein is Protein arginine N-methyltransferase 2 of Aspergillus oryzae (strain ATCC 42149 / RIB 40) (Yellow koji mold).